The following is a 161-amino-acid chain: MKNKAIYPGTFDPITYGHIDILTRAAGMFDTVLLAIAASARKNPMFSLEERVALAKEVTQHLPNVEVVGFCELMANFAKKQQATILIRGVRSVSDFEYEWQLANMNRHFAPDLDSVFLLPSQNLSFVSSSLIKDVARHDGDVSTFLPEVVATAMLQKLGKR.

Thr10 serves as a coordination point for substrate. Residues 10 to 11 (TF) and His18 contribute to the ATP site. Substrate contacts are provided by Lys42, Met74, and Arg88. ATP contacts are provided by residues 89-91 (GVR), Glu99, and 124-130 (LSFVSSS).

The protein belongs to the bacterial CoaD family. In terms of assembly, homohexamer. It depends on Mg(2+) as a cofactor.

Its subcellular location is the cytoplasm. It catalyses the reaction (R)-4'-phosphopantetheine + ATP + H(+) = 3'-dephospho-CoA + diphosphate. It functions in the pathway cofactor biosynthesis; coenzyme A biosynthesis; CoA from (R)-pantothenate: step 4/5. In terms of biological role, reversibly transfers an adenylyl group from ATP to 4'-phosphopantetheine, yielding dephospho-CoA (dPCoA) and pyrophosphate. The sequence is that of Phosphopantetheine adenylyltransferase from Proteus mirabilis (strain HI4320).